We begin with the raw amino-acid sequence, 91 residues long: Glycophorin-B (91 aa).

Residues 1-19 (MYGKIIFVLLLSEIVSISA) form the signal peptide. Residues 20 to 59 (LSTTEVAMHTSTSSSVTKSYISSQTNGETGQLVHRFTVPA) are Extracellular-facing. An O-linked (GalNAc...) threonine glycan is attached at T36. O-linked (GalNAc...) serine glycosylation occurs at S38. Residues 60 to 81 (PVVIILIILCVMAGIIGTILLI) traverse the membrane as a helical segment. At 82 to 91 (SYSIRRLIKA) the chain is on the cytoplasmic side.

It belongs to the glycophorin-A family. Component of the ankyrin-1 complex in the erythrocyte, composed of ANK1, RHCE, RHAG, SLC4A1, EPB42, GYPA, GYPB and AQP1. Interacts (via the N-terminal) with RHAG; this interaction bridges the (RHAG)2(RHCE) heterotrimer with the SLC4A1 Band 3 I dimer complexed with GYPA. The N-terminal extracellular domain is heavily glycosylated on serine and threonine residues.

The protein resides in the cell membrane. Its function is as follows. Component of the ankyrin-1 complex, a multiprotein complex involved in the stability and shape of the erythrocyte membrane. This Homo sapiens (Human) protein is Glycophorin-B.